A 227-amino-acid polypeptide reads, in one-letter code: Probable septum site-determining protein MinC (227 aa).

The protein belongs to the MinC family. Interacts with MinD and FtsZ.

Its function is as follows. Cell division inhibitor that blocks the formation of polar Z ring septums. Rapidly oscillates between the poles of the cell to destabilize FtsZ filaments that have formed before they mature into polar Z rings. Prevents FtsZ polymerization. The polypeptide is Probable septum site-determining protein MinC (Geobacillus kaustophilus (strain HTA426)).